The chain runs to 228 residues: Phosphoribosylformylglycinamidine synthase subunit PurQ (228 aa).

The 227-residue stretch at 2–228 folds into the Glutamine amidotransferase type-1 domain; it reads TVVVVQFGGS…DGKGILQAFG (227 aa). The active-site Nucleophile is the Cys-88. Catalysis depends on residues His-205 and Glu-207.

In terms of assembly, part of the FGAM synthase complex composed of 1 PurL, 1 PurQ and 2 PurS subunits.

Its subcellular location is the cytoplasm. It carries out the reaction N(2)-formyl-N(1)-(5-phospho-beta-D-ribosyl)glycinamide + L-glutamine + ATP + H2O = 2-formamido-N(1)-(5-O-phospho-beta-D-ribosyl)acetamidine + L-glutamate + ADP + phosphate + H(+). The enzyme catalyses L-glutamine + H2O = L-glutamate + NH4(+). It functions in the pathway purine metabolism; IMP biosynthesis via de novo pathway; 5-amino-1-(5-phospho-D-ribosyl)imidazole from N(2)-formyl-N(1)-(5-phospho-D-ribosyl)glycinamide: step 1/2. Functionally, part of the phosphoribosylformylglycinamidine synthase complex involved in the purines biosynthetic pathway. Catalyzes the ATP-dependent conversion of formylglycinamide ribonucleotide (FGAR) and glutamine to yield formylglycinamidine ribonucleotide (FGAM) and glutamate. The FGAM synthase complex is composed of three subunits. PurQ produces an ammonia molecule by converting glutamine to glutamate. PurL transfers the ammonia molecule to FGAR to form FGAM in an ATP-dependent manner. PurS interacts with PurQ and PurL and is thought to assist in the transfer of the ammonia molecule from PurQ to PurL. This is Phosphoribosylformylglycinamidine synthase subunit PurQ from Haloquadratum walsbyi (strain DSM 16790 / HBSQ001).